The primary structure comprises 324 residues: Succinylglutamate desuccinylase (324 aa).

His53, Glu56, and His148 together coordinate Zn(2+). Glu211 is a catalytic residue.

Belongs to the AspA/AstE family. Succinylglutamate desuccinylase subfamily. Requires Zn(2+) as cofactor.

It carries out the reaction N-succinyl-L-glutamate + H2O = L-glutamate + succinate. It functions in the pathway amino-acid degradation; L-arginine degradation via AST pathway; L-glutamate and succinate from L-arginine: step 5/5. Transforms N(2)-succinylglutamate into succinate and glutamate. The protein is Succinylglutamate desuccinylase of Acinetobacter baumannii (strain AB0057).